The primary structure comprises 362 residues: Type-1 angiotensin II receptor A (362 aa).

The Extracellular portion of the chain corresponds to 1-26 (MSNASTVETSDVERIAVNCSKSGMHN). N-linked (GlcNAc...) asparagine glycans are attached at residues asparagine 3 and asparagine 18. 2 disulfide bridges follow: cysteine 19–cysteine 273 and cysteine 102–cysteine 181. A helical transmembrane segment spans residues 27–56 (YIFIAIPIIYSTIFVVGVFGNSMVVIVIYS). Residues 57 to 62 (YMKMKT) lie on the Cytoplasmic side of the membrane. The helical transmembrane segment at 63 to 90 (VASIFLMNLALSDLCFVITLPLWAAYTA) threads the bilayer. Over 91 to 99 (MHYHWPFGN) the chain is Extracellular. Residues 100–126 (FLCKVASTAITLNLYTTVFLLTCLSID) form a helical membrane-spanning segment. Residues 127–142 (RYSAIVHPMKSRIWRT) lie on the Cytoplasmic side of the membrane. A helical transmembrane segment spans residues 143 to 166 (AMVARLTCVGIWLVAFLASMPSII). Topologically, residues 167-191 (YRQIYLFHDTNQTVCAIVYDSGHIY) are extracellular. Residue arginine 168 participates in angiotensin II binding. An N-linked (GlcNAc...) asparagine glycan is attached at asparagine 177. Angiotensin II contacts are provided by tyrosine 185 and lysine 200. The chain crosses the membrane as a helical span at residues 192–217 (FMVGMSLAKNIVGFLIPFLIILTSYT). At 218-238 (LIGKTLKEVYRAQRARNDDIF) the chain is on the cytoplasmic side. Residues 239–267 (KMIVAVVLLFFFCWIPYQVFTFLDVLIQM) traverse the membrane as a helical segment. Residues 268 to 277 (DVIQNCKMYD) are Extracellular-facing. A helical membrane pass occupies residues 278-303 (IVDTGMPITICIAYFNSCLNPFLYGF). Residues 304–362 (FGKNFRKHFLQLIKYIPPKMRTHASVNTKSSLVSSSLSDTKRASKKIALQMTDNEEHCK) are Cytoplasmic-facing. Cysteine 361 carries S-palmitoyl cysteine lipidation.

This sequence belongs to the G-protein coupled receptor 1 family. C-terminal Ser or Thr residues may be phosphorylated. In terms of tissue distribution, expressed in lung, liver, kidney, and spleen, with highest expression in the heart.

It localises to the cell membrane. In terms of biological role, receptor for angiotensin II, a vasoconstricting peptide, which acts as a key regulator of blood pressure and sodium retention by the kidney. The activated receptor in turn couples to G-alpha proteins G(q) (GNAQ, GNA11, GNA14 or GNA15) and thus activates phospholipase C and increases the cytosolic Ca(2+) concentrations, which in turn triggers cellular responses such as stimulation of protein kinase C. The sequence is that of Type-1 angiotensin II receptor A (agtr1-a) from Xenopus laevis (African clawed frog).